We begin with the raw amino-acid sequence, 255 residues long: Sporulation-specific N-acetylmuramoyl-L-alanine amidase (255 aa).

The 169-residue stretch at 4–172 folds into the MurNAc-LAA domain; it reads IFIDPGHGGS…LARGHANGLE (169 aa). The Zn(2+) site is built by His-10, Glu-24, and His-79. The active site involves Glu-141. One can recognise an SPOR domain in the interval 180–254; that stretch reads TSSSGLYKVQ…AGFDAIVILE (75 aa). 2 repeat units span residues 184–219 and 220–255. Residues 184–255 form a 2 X 35 AA approximate tandem repeats region; it reads GLYKVQIGAF…GFDAIVILES (72 aa).

This sequence belongs to the N-acetylmuramoyl-L-alanine amidase 3 family. The cofactor is Zn(2+).

It localises to the secreted. It is found in the cell wall. The enzyme catalyses Hydrolyzes the link between N-acetylmuramoyl residues and L-amino acid residues in certain cell-wall glycopeptides.. Inhibited by EDTA. In terms of biological role, autolysins are involved in some important biological processes such as cell separation, cell-wall turnover, competence for genetic transformation, formation of the flagella - in particular of its basal body - and sporulation. CwlC is able to hydrolyze type A cell walls such as B.subtilis. Its main function is to lyze the mother cell wall peptidoglycan, playing a role during sporulation. The sequence is that of Sporulation-specific N-acetylmuramoyl-L-alanine amidase (cwlC) from Bacillus subtilis (strain 168).